Here is a 165-residue protein sequence, read N- to C-terminus: Chorismate pyruvate-lyase (165 aa).

Substrate contacts are provided by M35, R77, L115, and E156.

This sequence belongs to the UbiC family. Monomer.

The protein resides in the cytoplasm. It catalyses the reaction chorismate = 4-hydroxybenzoate + pyruvate. It functions in the pathway cofactor biosynthesis; ubiquinone biosynthesis. Functionally, removes the pyruvyl group from chorismate, with concomitant aromatization of the ring, to provide 4-hydroxybenzoate (4HB) for the ubiquinone pathway. The sequence is that of Chorismate pyruvate-lyase from Shigella boydii serotype 18 (strain CDC 3083-94 / BS512).